A 311-amino-acid chain; its full sequence is MQRFIKWLAVITSLDLLVVLLGGALVTKTGSGQGCGKSWPLCNGEFVPSNLSMETIIELSHRLTSGSAGILVTLLCILSWKYYKHVRETKTLAILSFVFLVAQALMGAAAVVWGQMPAVLAIHFGISLISFASVILLTCLIFEIDQKFDARSLIMDKKMKFHIYGVTIYSYIVVYTGALVRHERATLACPDFPLCSKSRPMPTQLHEWVQMGHRVAAMLIFAWILYAMIIAIRHYKQQRVVYWGWIISFILVTLQAIVGILVVFTNASLAMALLHSLFISCLFAVLCYLVMIGTRSTVNAKETESTSKQTK.

The Cytoplasmic portion of the chain corresponds to 1–6 (MQRFIK). A helical transmembrane segment spans residues 7–27 (WLAVITSLDLLVVLLGGALVT). Over 28–62 (KTGSGQGCGKSWPLCNGEFVPSNLSMETIIELSHR) the chain is Extracellular. A disulfide bond links Cys35 and Cys42. Residue Glu58 is part of the active site. Position 61 (His61) interacts with heme o. A helical transmembrane segment spans residues 63 to 83 (LTSGSAGILVTLLCILSWKYY). The Cytoplasmic segment spans residues 84-91 (KHVRETKT). The chain crosses the membrane as a helical span at residues 92 to 112 (LAILSFVFLVAQALMGAAAVV). Residues 113–121 (WGQMPAVLA) lie on the Extracellular side of the membrane. The chain crosses the membrane as a helical span at residues 122 to 142 (IHFGISLISFASVILLTCLIF). Position 123 (His123) interacts with heme o. The Cytoplasmic portion of the chain corresponds to 143 to 159 (EIDQKFDARSLIMDKKM). Residues 160 to 180 (KFHIYGVTIYSYIVVYTGALV) traverse the membrane as a helical segment. Residues 181–211 (RHERATLACPDFPLCSKSRPMPTQLHEWVQM) are Extracellular-facing. A disulfide bridge connects residues Cys189 and Cys195. The helical transmembrane segment at 212–232 (GHRVAAMLIFAWILYAMIIAI) threads the bilayer. Residue His213 participates in heme b binding. Residues 233–243 (RHYKQQRVVYW) lie on the Cytoplasmic side of the membrane. The chain crosses the membrane as a helical span at residues 244-264 (GWIISFILVTLQAIVGILVVF). The Extracellular segment spans residues 265-271 (TNASLAM). Residues 272–292 (ALLHSLFISCLFAVLCYLVMI) traverse the membrane as a helical segment. His275 provides a ligand contact to heme b. Residues 293–311 (GTRSTVNAKETESTSKQTK) lie on the Cytoplasmic side of the membrane.

Belongs to the COX15/CtaA family. Type 1 subfamily. As to quaternary structure, interacts with CtaB. Requires heme b as cofactor.

It is found in the cell membrane. It carries out the reaction Fe(II)-heme o + 2 A + H2O = Fe(II)-heme a + 2 AH2. It functions in the pathway porphyrin-containing compound metabolism; heme A biosynthesis; heme A from heme O: step 1/1. Functionally, catalyzes the conversion of heme O to heme A by two successive hydroxylations of the methyl group at C8. The first hydroxylation forms heme I, the second hydroxylation results in an unstable dihydroxymethyl group, which spontaneously dehydrates, resulting in the formyl group of heme A. This is Heme A synthase from Bacillus mycoides (strain KBAB4) (Bacillus weihenstephanensis).